A 381-amino-acid chain; its full sequence is Alkanesulfonate monooxygenase (381 aa).

This sequence belongs to the SsuD family. In terms of assembly, homotetramer.

The enzyme catalyses an alkanesulfonate + FMNH2 + O2 = an aldehyde + FMN + sulfite + H2O + 2 H(+). Its function is as follows. Catalyzes the desulfonation of aliphatic sulfonates. The chain is Alkanesulfonate monooxygenase from Citrobacter koseri (strain ATCC BAA-895 / CDC 4225-83 / SGSC4696).